We begin with the raw amino-acid sequence, 317 residues long: Protein translocase subunit SecF (317 aa).

A run of 6 helical transmembrane segments spans residues 11-31 (FYLL…LFGL), 135-155 (RSIV…AFAF), 166-186 (ICAI…FAIL), 197-217 (LFVT…IVVF), 244-266 (LVRS…FFGG), and 276-298 (LLIG…LVSW).

It belongs to the SecD/SecF family. SecF subfamily. In terms of assembly, forms a complex with SecD. Part of the essential Sec protein translocation apparatus which comprises SecA, SecYEG and auxiliary proteins SecDF. Other proteins may also be involved.

It localises to the cell membrane. Functionally, part of the Sec protein translocase complex. Interacts with the SecYEG preprotein conducting channel. SecDF uses the proton motive force (PMF) to complete protein translocation after the ATP-dependent function of SecA. This is Protein translocase subunit SecF from Thermobaculum terrenum (strain ATCC BAA-798 / CCMEE 7001 / YNP1).